We begin with the raw amino-acid sequence, 625 residues long: Probable potassium transport system protein Kup 2 (625 aa).

A run of 12 helical transmembrane segments spans residues L15–F35, I52–V72, G98–L118, L134–F154, I164–F184, I203–V223, W246–L266, F284–I304, V336–F356, A365–A385, F394–I414, and L417–T437.

The protein belongs to the HAK/KUP transporter (TC 2.A.72) family.

It is found in the cell inner membrane. The catalysed reaction is K(+)(in) + H(+)(in) = K(+)(out) + H(+)(out). Functionally, transport of potassium into the cell. Likely operates as a K(+):H(+) symporter. This Legionella pneumophila subsp. pneumophila (strain Philadelphia 1 / ATCC 33152 / DSM 7513) protein is Probable potassium transport system protein Kup 2.